A 231-amino-acid polypeptide reads, in one-letter code: Trypsin (231 aa).

A propeptide spans 1-8 (FPTDDDDK) (activation peptide). In terms of domain architecture, Peptidase S1 spans 9-229 (IVGGYTCAAN…YVNWIQQTIA (221 aa)). Cystine bridges form between Cys15–Cys145, Cys33–Cys49, Cys117–Cys218, Cys124–Cys191, Cys156–Cys170, and Cys181–Cys205. The active-site Charge relay system is the His48. Ca(2+) is bound by residues Glu60, Asn62, Val65, and Glu70. Catalysis depends on Asp92, which acts as the Charge relay system. Ser185 (charge relay system) is an active-site residue.

The protein belongs to the peptidase S1 family. It depends on Ca(2+) as a cofactor.

Its subcellular location is the secreted. The protein localises to the extracellular space. It catalyses the reaction Preferential cleavage: Arg-|-Xaa, Lys-|-Xaa.. In Sus scrofa (Pig), this protein is Trypsin.